Reading from the N-terminus, the 136-residue chain is MTAYAAIIGTKDNPVYELEMGPINEKLDRSLNSHLNQFIVHSSLDIVDQLQWTSNAFYMKTIDQFHEMYISAYVTPSNMRFMLLHQNQSADNIKLFFQELHELYIKTLMSPFYQPNQPIRSQAFDLKVRSIARRYL.

It belongs to the TRAPP small subunits family. Sedlin subfamily.

Its subcellular location is the cytoplasm. It is found in the golgi apparatus. It localises to the cis-Golgi network. The protein localises to the endoplasmic reticulum. Component of the TRAPP I and TRAPP II complexes. TRAPP I plays a key role in the late stages of endoplasmic reticulum to Golgi traffic. TRAPP II seems to play a role in intra-Golgi transport. The protein is Transport protein particle 20 kDa subunit (trs20) of Schizosaccharomyces pombe (strain 972 / ATCC 24843) (Fission yeast).